We begin with the raw amino-acid sequence, 146 residues long: MADVSSTELKAAYDEVLADSNDTNWCLFKYEGKNKIVLSGKGSGGFAELAQEINQPSERLYAYLRVVSGDDESKRSKFVFISWCGEEVGPLAKANVSVHKASVKQVIKNIGVEVHYTVADDLNEEELMTKVRKSSGADYSGNKSTN.

The ADF-H domain occupies M1–R132.

It belongs to the actin-binding proteins ADF family. Coactosin subfamily. Post-translationally, the N-terminus is blocked.

It localises to the cytoplasm. It is found in the cytoskeleton. Binds to F-actin in a calcium independent manner. Binds to the filaments along their length. The sequence is that of Coactosin (coaA) from Dictyostelium discoideum (Social amoeba).